We begin with the raw amino-acid sequence, 151 residues long: MPTWRYSVELEPERTAKASLRDVSMSYKLTVETLRLIKGKSIEEARRILTEIAEMKRSVPLKRYNKKVGHRSDVPGPGRYPVKVAKNLLKLLDNLENNAEFKGLNVENLRIVHAAAHKGMKIRNYLPRAFGRATPYYDQLVHVEIIAREVE.

Belongs to the universal ribosomal protein uL22 family. In terms of assembly, part of the 50S ribosomal subunit.

In terms of biological role, this protein binds specifically to 23S rRNA. It makes multiple contacts with different domains of the 23S rRNA in the assembled 50S subunit and ribosome. Functionally, the globular domain of the protein is located near the polypeptide exit tunnel on the outside of the subunit, while an extended beta-hairpin is found that lines the wall of the exit tunnel in the center of the 70S ribosome. The polypeptide is Large ribosomal subunit protein uL22 (Thermofilum pendens (strain DSM 2475 / Hrk 5)).